The chain runs to 285 residues: Bifunctional protein FolD (285 aa).

NADP(+)-binding positions include 166-168, Ser-191, and Ile-232; that span reads GAS.

Belongs to the tetrahydrofolate dehydrogenase/cyclohydrolase family. As to quaternary structure, homodimer.

It carries out the reaction (6R)-5,10-methylene-5,6,7,8-tetrahydrofolate + NADP(+) = (6R)-5,10-methenyltetrahydrofolate + NADPH. The enzyme catalyses (6R)-5,10-methenyltetrahydrofolate + H2O = (6R)-10-formyltetrahydrofolate + H(+). It participates in one-carbon metabolism; tetrahydrofolate interconversion. Its function is as follows. Catalyzes the oxidation of 5,10-methylenetetrahydrofolate to 5,10-methenyltetrahydrofolate and then the hydrolysis of 5,10-methenyltetrahydrofolate to 10-formyltetrahydrofolate. The polypeptide is Bifunctional protein FolD (Edwardsiella ictaluri (strain 93-146)).